The chain runs to 535 residues: CTP synthase (535 aa).

The tract at residues 1 to 266 (MKTKFIFITG…DEQVVEKLNI (266 aa)) is amidoligase domain. Serine 14 serves as a coordination point for CTP. UTP is bound at residue serine 14. ATP contacts are provided by residues 15 to 20 (SIGKGL) and aspartate 72. Mg(2+)-binding residues include aspartate 72 and glutamate 140. CTP is bound by residues 147–149 (DIE), 187–192 (KTKPTQ), and lysine 223. UTP is bound by residues 187 to 192 (KTKPTQ) and lysine 223. In terms of domain architecture, Glutamine amidotransferase type-1 spans 292–534 (RIAIVGKYVN…IGASLTHRNQ (243 aa)). Glycine 354 is an L-glutamine binding site. Cysteine 381 functions as the Nucleophile; for glutamine hydrolysis in the catalytic mechanism. L-glutamine-binding positions include 382 to 385 (LGMQ), glutamate 405, and arginine 462. Active-site residues include histidine 507 and glutamate 509.

The protein belongs to the CTP synthase family. As to quaternary structure, homotetramer.

The catalysed reaction is UTP + L-glutamine + ATP + H2O = CTP + L-glutamate + ADP + phosphate + 2 H(+). The enzyme catalyses L-glutamine + H2O = L-glutamate + NH4(+). It carries out the reaction UTP + NH4(+) + ATP = CTP + ADP + phosphate + 2 H(+). It functions in the pathway pyrimidine metabolism; CTP biosynthesis via de novo pathway; CTP from UDP: step 2/2. Allosterically activated by GTP, when glutamine is the substrate; GTP has no effect on the reaction when ammonia is the substrate. The allosteric effector GTP functions by stabilizing the protein conformation that binds the tetrahedral intermediate(s) formed during glutamine hydrolysis. Inhibited by the product CTP, via allosteric rather than competitive inhibition. Catalyzes the ATP-dependent amination of UTP to CTP with either L-glutamine or ammonia as the source of nitrogen. Regulates intracellular CTP levels through interactions with the four ribonucleotide triphosphates. The polypeptide is CTP synthase (Trichlorobacter lovleyi (strain ATCC BAA-1151 / DSM 17278 / SZ) (Geobacter lovleyi)).